The primary structure comprises 280 residues: 2-dehydro-3-deoxyphosphooctonate aldolase (280 aa).

This sequence belongs to the KdsA family.

It localises to the cytoplasm. It catalyses the reaction D-arabinose 5-phosphate + phosphoenolpyruvate + H2O = 3-deoxy-alpha-D-manno-2-octulosonate-8-phosphate + phosphate. It functions in the pathway carbohydrate biosynthesis; 3-deoxy-D-manno-octulosonate biosynthesis; 3-deoxy-D-manno-octulosonate from D-ribulose 5-phosphate: step 2/3. The protein operates within bacterial outer membrane biogenesis; lipopolysaccharide biosynthesis. The chain is 2-dehydro-3-deoxyphosphooctonate aldolase from Nitrosococcus oceani (strain ATCC 19707 / BCRC 17464 / JCM 30415 / NCIMB 11848 / C-107).